A 433-amino-acid polypeptide reads, in one-letter code: D-amino acid dehydrogenase (433 aa).

3–17 (VLVLGSGVIGTASAY) contacts FAD.

Belongs to the DadA oxidoreductase family. FAD serves as cofactor.

The catalysed reaction is a D-alpha-amino acid + A + H2O = a 2-oxocarboxylate + AH2 + NH4(+). It participates in amino-acid degradation; D-alanine degradation; NH(3) and pyruvate from D-alanine: step 1/1. Its function is as follows. Oxidative deamination of D-amino acids. This is D-amino acid dehydrogenase from Pseudomonas putida (strain W619).